Here is a 217-residue protein sequence, read N- to C-terminus: MTELNKYIDHTNLSPSATSKDIDKLIQEAIKYDFKSVCIAPSYVKYAKEALKNSDVLVCTVIGFPLGYNATSVKVYETKIAVEHGADEIDMVINVGRFKDGQYEYVLNEIKAIKEACNGKTLKVIVETALLTKAELIKITELVMQSGADFIKTSTGFSYRGASFEDIQTMKETCGDKLLIKASGGIKNLADAQEMIRLGANVWVCLNQFQLWKNYLN.

D90 (proton donor/acceptor) is an active-site residue. K152 (schiff-base intermediate with acetaldehyde) is an active-site residue. The Proton donor/acceptor role is filled by K181.

It belongs to the DeoC/FbaB aldolase family. DeoC type 1 subfamily.

The protein localises to the cytoplasm. The enzyme catalyses 2-deoxy-D-ribose 5-phosphate = D-glyceraldehyde 3-phosphate + acetaldehyde. The protein operates within carbohydrate degradation; 2-deoxy-D-ribose 1-phosphate degradation; D-glyceraldehyde 3-phosphate and acetaldehyde from 2-deoxy-alpha-D-ribose 1-phosphate: step 2/2. Functionally, catalyzes a reversible aldol reaction between acetaldehyde and D-glyceraldehyde 3-phosphate to generate 2-deoxy-D-ribose 5-phosphate. This Metamycoplasma hominis (Mycoplasma hominis) protein is Deoxyribose-phosphate aldolase.